The sequence spans 126 residues: Holo-[acyl-carrier-protein] synthase (126 aa).

2 residues coordinate Mg(2+): Asp9 and Glu58.

It belongs to the P-Pant transferase superfamily. AcpS family. Mg(2+) is required as a cofactor.

The protein localises to the cytoplasm. It catalyses the reaction apo-[ACP] + CoA = holo-[ACP] + adenosine 3',5'-bisphosphate + H(+). In terms of biological role, transfers the 4'-phosphopantetheine moiety from coenzyme A to a Ser of acyl-carrier-protein. In Edwardsiella ictaluri (strain 93-146), this protein is Holo-[acyl-carrier-protein] synthase.